Reading from the N-terminus, the 260-residue chain is Ubiquinone/menaquinone biosynthesis C-methyltransferase UbiE (260 aa).

Residues threonine 83, aspartate 104, and 132 to 133 (NA) contribute to the S-adenosyl-L-methionine site.

The protein belongs to the class I-like SAM-binding methyltransferase superfamily. MenG/UbiE family.

It catalyses the reaction a 2-demethylmenaquinol + S-adenosyl-L-methionine = a menaquinol + S-adenosyl-L-homocysteine + H(+). It carries out the reaction a 2-methoxy-6-(all-trans-polyprenyl)benzene-1,4-diol + S-adenosyl-L-methionine = a 5-methoxy-2-methyl-3-(all-trans-polyprenyl)benzene-1,4-diol + S-adenosyl-L-homocysteine + H(+). It participates in quinol/quinone metabolism; menaquinone biosynthesis; menaquinol from 1,4-dihydroxy-2-naphthoate: step 2/2. The protein operates within cofactor biosynthesis; ubiquinone biosynthesis. Functionally, methyltransferase required for the conversion of demethylmenaquinol (DMKH2) to menaquinol (MKH2) and the conversion of 2-polyprenyl-6-methoxy-1,4-benzoquinol (DDMQH2) to 2-polyprenyl-3-methyl-6-methoxy-1,4-benzoquinol (DMQH2). The polypeptide is Ubiquinone/menaquinone biosynthesis C-methyltransferase UbiE (Bartonella tribocorum (strain CIP 105476 / IBS 506)).